We begin with the raw amino-acid sequence, 339 residues long: Leucine-rich repeat-containing protein 75A (339 aa).

The disordered stretch occupies residues 1–25 (MGTRQTKGSLAERASPGAAPGPRRE). Residues 11-21 (AERASPGAAPG) show a composition bias toward low complexity. LRR repeat units follow at residues 203–216 (VDSVELGFTGLTDD) and 228–241 (LPRLTTLALNGNRL). A disordered region spans residues 294–339 (LPTILELGEGPGTGEEAREGTDQQDPIGSPVTPARGQESTECVIQT). Residue Ser322 is modified to Phosphoserine. Thr325 is modified (phosphothreonine). The segment covering 330-339 (QESTECVIQT) has biased composition (polar residues).

This sequence belongs to the LRRC75 family.

The protein is Leucine-rich repeat-containing protein 75A (Lrrc75a) of Mus musculus (Mouse).